A 169-amino-acid chain; its full sequence is MNVLIISDSHGLEEELQTIAKRHEAEVDLMIHCGDSELETRHPALEPYAVVKGNCDFAGDFKDELLLTAGSRKILVTHGHLHGIKQTLLNVYYRAEELGADVICFGHSHIAGSEVLRGKLMINPGSIRLPRVRRTESYAILTLENDAATVRFYDQAGNEIEDLQNRVTL.

Residues aspartate 8, histidine 10, aspartate 35, asparagine 54, histidine 78, histidine 107, and histidine 109 each contribute to the Mn(2+) site.

It belongs to the metallophosphoesterase superfamily. YfcE family. The cofactor is Mn(2+).

The sequence is that of Probable metallophosphoesterase YsnB (ysnB) from Bacillus subtilis (strain 168).